Reading from the N-terminus, the 412-residue chain is MAERVVLAYSGGLDTSVGIGWLKDATGKEVVALAVDVGQGGEDMEVIRQRALDCGAVEAVVVDAKDEFADDYIVPALKANALYQKRYPLVSGLSRPLIAKHLARVAHELGANSVAHGCTGKGNDQVRFEAAVAALAPDLTSIAPVRDLALTRDKAIVYANEHDLPIEQSKKSPYSIDKNVWGRAVETGFLEDPWNGPIEDLYEYTQDPDVLRDATEVTITFEAGVPVAIDGVRYSPLRIVQELNAAAGAHGIGRIDVVEDRLVGIKSREVYEAPAAMTLIEAHEELESLTIERDLGRYKRGVEKDWANLVYDGLWFSGLKRSLDAFIEDSQRHVSGDIRMTLRGGRAVVTGRRSESSLYDFDLATYDTGDTFDQSLSKGFIELWSLPSKISARRDLAVEQAALAADPAPAAE.

Residue 8–16 (AYSGGLDTS) participates in ATP binding. Tyr-87 serves as a coordination point for L-citrulline. Gly-117 is a binding site for ATP. 3 residues coordinate L-aspartate: Thr-119, Asn-123, and Asp-124. Asn-123 provides a ligand contact to L-citrulline. Positions 127, 175, 259, and 271 each coordinate L-citrulline.

It belongs to the argininosuccinate synthase family. Type 1 subfamily. Homotetramer.

It localises to the cytoplasm. The catalysed reaction is L-citrulline + L-aspartate + ATP = 2-(N(omega)-L-arginino)succinate + AMP + diphosphate + H(+). It functions in the pathway amino-acid biosynthesis; L-arginine biosynthesis; L-arginine from L-ornithine and carbamoyl phosphate: step 2/3. In Clavibacter michiganensis subsp. michiganensis (strain NCPPB 382), this protein is Argininosuccinate synthase.